The following is a 309-amino-acid chain: MSDQVSLGVVGIGKIARDQHLPAIDAEPGFKLTACASRHAEVTGVRNYRDLRALLAAERELDAVSLCAPPQVRYAQARAALEAGKHVMLEKPPGATLGEVAVLEALARERGLTLFATWHSRCASAVEPAREWLATRAIRAVQVRWKEDVRRWHPGQQWIWEPGGLGVFDPGINALSIVTRILPRELVLREATLIVPSDVQTPIAAELDCADTDGVPVRAEFDWRHGPVEQWEIAVDTADGVLAISRGGAQLSIAGEPVELGPEREYPALYAHFHALIARGESDVDVRPLRLVADAFLFGRRVQTDAFGR.

Residues isoleucine 15 and serine 37–arginine 38 each bind NADP(+). The Proton donor role is filled by lysine 91. Aspartate 169 is a binding site for NADP(+).

This sequence belongs to the Gfo/Idh/MocA family. In terms of assembly, monomer.

The catalysed reaction is alpha-L-arabinopyanose + NAD(+) = L-arabinono-1,4-lactone + NADH + H(+). It catalyses the reaction alpha-L-arabinopyanose + NADP(+) = L-arabinono-1,4-lactone + NADPH + H(+). It carries out the reaction D-galactose + NAD(+) = D-galactono-1,4-lactone + NADH + H(+). The enzyme catalyses D-galactose + NADP(+) = D-galactono-1,5-lactone + NADPH + H(+). The protein operates within carbohydrate degradation; L-arabinose degradation via L-arabinono-1,4-lactone pathway. In terms of biological role, catalyzes the NAD(P)(+)-dependent conversion of L-arabinose to L-arabino-gamma-lactone. Is involved in a degradation pathway of L-arabinose that allows A.brasilense to grow on L-arabinose as a sole carbon source. Prefers NADP(+) to NAD(+) as electron acceptor. Displays high catalytic efficiency for both L-arabinose and D-galactose in vitro. However, the enzyme appears to be involved in the metabolism of L-arabinose but not D-galactose in vivo. To a lesser extent, is also active on D-talose and D-xylose as substrates in vitro, but not with D-arabinose, D-glucose, D-ribose, L-xylose, L-mannose, L-lyxose, and D-fructose. The protein is L-arabinose 1-dehydrogenase (NAD(P)(+)) (araA) of Azospirillum brasilense.